The chain runs to 138 residues: Putative pre-16S rRNA nuclease (138 aa).

It belongs to the YqgF nuclease family.

It is found in the cytoplasm. In terms of biological role, could be a nuclease involved in processing of the 5'-end of pre-16S rRNA. This is Putative pre-16S rRNA nuclease from Clostridium beijerinckii (strain ATCC 51743 / NCIMB 8052) (Clostridium acetobutylicum).